Reading from the N-terminus, the 945-residue chain is Kinesin-like protein KIN-7F (945 aa).

One can recognise a Kinesin motor domain in the interval 34-356 (RILVSVRLRP…LLFASCAKEV (323 aa)). Residue 120 to 127 (GQTSSGKT) participates in ATP binding. Residues 365-437 (VMSDKALVKQ…QDLLQVVGDN (73 aa)) adopt a coiled-coil conformation. Disordered regions lie at residues 484 to 512 (RRVAQREHKPQQAENNVQFTTPSRYSVSS) and 553 to 588 (NECLESSAVGSNSLQDPNAGSSMHINNDSNSSMNSR). 2 stretches are compositionally biased toward polar residues: residues 495–512 (QAENNVQFTTPSRYSVSS) and 560–587 (AVGSNSLQDPNAGSSMHINNDSNSSMNS).

Belongs to the TRAFAC class myosin-kinesin ATPase superfamily. Kinesin family. KIN-7 subfamily. Binds microtubules.

In terms of biological role, binds ATP/ADP in vitro. Possesses low ATPase activity but high affinity for microtubules. This is Kinesin-like protein KIN-7F from Oryza sativa subsp. japonica (Rice).